Consider the following 141-residue polypeptide: MAETDRATDKPAGAPKPAKTASPERVAAFRTGLSAEARAAALLIAKGYRILAKRFRTPHGEIDLIARKRGLVAFVEVKARASLDDAAYAVTPRQQQRIIDAAQAWLMAHPDHAELELRFDAILVAPRSLPRHLMAAFDASP.

The disordered stretch occupies residues 1 to 24; that stretch reads MAETDRATDKPAGAPKPAKTASPE. A compositionally biased stretch (low complexity) spans 10–19; that stretch reads KPAGAPKPAK.

This sequence belongs to the UPF0102 family.

In Bradyrhizobium sp. (strain ORS 278), this protein is UPF0102 protein BRADO0179.